A 261-amino-acid chain; its full sequence is tRNA 5-carboxymethoxyuridine methyltransferase (261 aa).

S-adenosyl-L-methionine contacts are provided by residues Arg-26, 52 to 53, Asp-73, 102 to 103, and His-119; these read GG and AQ.

It belongs to the class I-like SAM-binding methyltransferase superfamily. CmoM family. In terms of assembly, homodimer.

It catalyses the reaction 5-carboxymethoxyuridine(34) in tRNA + S-adenosyl-L-methionine = 5-methoxycarbonylmethoxyuridine(34) in tRNA + S-adenosyl-L-homocysteine. Its function is as follows. Catalyzes the methylation of 5-carboxymethoxyuridine (cmo5U) to form 5-methoxycarbonylmethoxyuridine (mcmo5U) at position 34 in tRNAs. This Escherichia coli O157:H7 protein is tRNA 5-carboxymethoxyuridine methyltransferase.